We begin with the raw amino-acid sequence, 371 residues long: Gustatory receptor-like 65a (371 aa).

At 1-13 (MREVNLLNRFTRQ) the chain is on the cytoplasmic side. Residues 14–34 (FLFLIVLVTQICGVATFVYNS) form a helical membrane-spanning segment. Topologically, residues 35-42 (KAQCFRQS) are extracellular. A helical membrane pass occupies residues 43 to 63 (GFLRFYSSLVLIFLALFLIVT). At 64-72 (TSKMFHNLQ) the chain is on the cytoplasmic side. A helical membrane pass occupies residues 73 to 93 (AVWPYVVGSVIILVVRIHGLL). Topologically, residues 94-126 (ESAEIVELLNQMLRIMRQVNLMARHPNLFRLKH) are extracellular. A helical transmembrane segment spans residues 127–147 (LLLLLLALQNLLRSLNTIVGI). Over 148-161 (SNHSAEAYDSFLNS) the chain is Cytoplasmic. A helical transmembrane segment spans residues 162–182 (VILLIILAVLLSFLLQITINI). Residues 183–251 (CLFVVLIATY…FHITVRIIRH (69 aa)) lie on the Extracellular side of the membrane. A helical membrane pass occupies residues 252–272 (FRFHWLCAIIYGLLPFFSLTA). The Cytoplasmic portion of the chain corresponds to 273 to 277 (KDQNG). Residues 278–298 (FNFLIISALNIIFQWTIFAIL) form a helical membrane-spanning segment. Over 299-371 (SRESRITRSL…FVNRLEYLHI (73 aa)) the chain is Extracellular.

It localises to the cell membrane. The protein is Gustatory receptor-like 65a of Drosophila melanogaster (Fruit fly).